A 570-amino-acid chain; its full sequence is Proline--tRNA ligase (570 aa).

The tract at residues 238 to 257 (ARPAPAEHAEPRPLEKVETP) is disordered.

It belongs to the class-II aminoacyl-tRNA synthetase family. ProS type 1 subfamily. In terms of assembly, homodimer.

The protein localises to the cytoplasm. It carries out the reaction tRNA(Pro) + L-proline + ATP = L-prolyl-tRNA(Pro) + AMP + diphosphate. In terms of biological role, catalyzes the attachment of proline to tRNA(Pro) in a two-step reaction: proline is first activated by ATP to form Pro-AMP and then transferred to the acceptor end of tRNA(Pro). As ProRS can inadvertently accommodate and process non-cognate amino acids such as alanine and cysteine, to avoid such errors it has two additional distinct editing activities against alanine. One activity is designated as 'pretransfer' editing and involves the tRNA(Pro)-independent hydrolysis of activated Ala-AMP. The other activity is designated 'posttransfer' editing and involves deacylation of mischarged Ala-tRNA(Pro). The misacylated Cys-tRNA(Pro) is not edited by ProRS. In Geobacter sulfurreducens (strain ATCC 51573 / DSM 12127 / PCA), this protein is Proline--tRNA ligase.